Consider the following 462-residue polypeptide: MRSINQLLKQASLSQKSQYNFSQTNLKKVIAEIIPQKQAELKEVKEKYGDKVVGQYTVKQVIGGMRGMKGLMSDLSRCDPYQGIIFRGYTIPQLKEFLPKADPKAADQANQEPLPEGIFWLLMTGQLPTHAQVDALKHEWQNRGTVNQDCVNFILNLPKDLHSMTMLSMALLYLQKDSKFAKLYDEGKISKKDYWEPFYEDSMDLIAKIPRVAAIIYRHKYRDSKLIDSDSKLDWAGNYAHMMGFEQHVVKECIRGYLSIHCDHEGGNVSAHTTHLVGSALSDPYLSYSAGVNGLAGPLHGLANQEVLKWLLQFIEEKGTKVSDKDIEDYVDHVISSGRVVPGYGHAVLRDTDPRFHHQVDFSKFHLKDDQMIKLLHQCADVIPKKLLTYKKIANPYPNVDCHSGVLLYSLGLTEYQYYTVVFAVSRALGCMANLIWSRAFGLPIERPGSADLKWFHDKYRE.

The N-terminal 21 residues, 1-21 (MRSINQLLKQASLSQKSQYNF), are a transit peptide targeting the mitochondrion. Residues His300, His346, and Asp401 contribute to the active site.

This sequence belongs to the citrate synthase family. Homodimer.

The protein localises to the mitochondrion matrix. It is found in the cytoplasm. The protein resides in the cytoskeleton. It catalyses the reaction oxaloacetate + acetyl-CoA + H2O = citrate + CoA + H(+). It participates in carbohydrate metabolism; tricarboxylic acid cycle; isocitrate from oxaloacetate: step 1/2. Structural protein involved in oral morphogenesis and in pronuclear behavior during conjugation. Respiratory enzyme. The chain is Citrate synthase, mitochondrial from Tetrahymena thermophila.